We begin with the raw amino-acid sequence, 240 residues long: 4-hydroxy-tetrahydrodipicolinate reductase (240 aa).

NAD(+) contacts are provided by residues 79–81 and 103–106; these read ATT and SANM. Residue H135 is the Proton donor/acceptor of the active site. H136 is a binding site for (S)-2,3,4,5-tetrahydrodipicolinate. Residue K139 is the Proton donor of the active site. (S)-2,3,4,5-tetrahydrodipicolinate is bound at residue 145–146; that stretch reads GT.

This sequence belongs to the DapB family.

It is found in the cytoplasm. It catalyses the reaction (S)-2,3,4,5-tetrahydrodipicolinate + NAD(+) + H2O = (2S,4S)-4-hydroxy-2,3,4,5-tetrahydrodipicolinate + NADH + H(+). It carries out the reaction (S)-2,3,4,5-tetrahydrodipicolinate + NADP(+) + H2O = (2S,4S)-4-hydroxy-2,3,4,5-tetrahydrodipicolinate + NADPH + H(+). Its pathway is amino-acid biosynthesis; L-lysine biosynthesis via DAP pathway; (S)-tetrahydrodipicolinate from L-aspartate: step 4/4. In terms of biological role, catalyzes the conversion of 4-hydroxy-tetrahydrodipicolinate (HTPA) to tetrahydrodipicolinate. The protein is 4-hydroxy-tetrahydrodipicolinate reductase of Staphylococcus aureus (strain MRSA252).